A 656-amino-acid chain; its full sequence is Tetratricopeptide repeat protein 30 homolog (656 aa).

TPR repeat units lie at residues 9 to 42 (EGEF…NPKN), 43 to 76 (LAAL…FPQY), 141 to 174 (AAVI…SGYQ), 176 to 208 (GLAY…GVKD), 238 to 271 (IEAF…NEHD), 378 to 412 (RKTA…DDSL), 416 to 449 (LPVL…CKEH), 451 to 484 (TWKL…KYDD), and 537 to 570 (SIIS…PEKK).

This sequence belongs to the TTC30/dfy-1/fleer family. As to quaternary structure, component of the IFT complex B composed of at least che-2, che-13, dyf-1, dyf-3, dyf-6, dyf-11, dyf-13, ift-20, ift-74, ift-81, ifta-2, osm-1, osm-5 and osm-6. As to expression, expressed in most amphid, both phasmid and several labial-quadrant neurons.

The protein resides in the cell projection. Its subcellular location is the cilium. Its function is as follows. Plays a role in anterograde intraflagellar transport (IFT), the process by which cilia precursors are transported from the base of the cilium to the site of their incorporation at the tip. Specifically required for the kinesin osm-3 to dock onto and move the IFT particles which contain these precursors. Component of the intraflagellar transport (IFT) complex B required for transport of proteins in the motile cilium. May be required for ciliary entrance and transport of specific ciliary cargo proteins such as che-3 which are related to motility. Required for polyglutamylation of axonemal tubulin in sensory cilia. In Caenorhabditis elegans, this protein is Tetratricopeptide repeat protein 30 homolog.